A 717-amino-acid polypeptide reads, in one-letter code: Segment polarity protein dishevelled homolog DVL-3 (717 aa).

The DIX domain maps to 1–82 (MGETKVIYHL…RVVCWLVSAD (82 aa)). The interval 89–235 (GSVCADIQSD…PQIERSSSFS (147 aa)) is disordered. Residues 118–127 (HPNTRGSQEN) are compositionally biased toward polar residues. The segment covering 140-155 (ARRERPGRKETSEHAT) has biased composition (basic and acidic residues). Positions 173–189 (ESSSTLMSSELDSTSFF) are enriched in low complexity. The segment covering 199-210 (RFSNSTEQSSAS) has biased composition (polar residues). Over residues 212–224 (LMRRHKRRRRKPK) the composition is skewed to basic residues. Residues 248–333 (TVTLNMEKYN…KPGPITLTVA (86 aa)) form the PDZ domain. The DEP domain occupies 421–495 (SESGLEVRDR…SEQCYYIFGD (75 aa)). The segment at 552–653 (PDPAYIYGGG…THQSFGPPGI (102 aa)) is disordered. Over residues 564–579 (GSQHSEGSRSSGSNRS) the composition is skewed to low complexity. 2 stretches are compositionally biased toward basic and acidic residues: residues 580–593 (STEKRKDRETKGGD) and 602–618 (ESDHTTRSSLRRDRAAS). Over residues 629-645 (HRSHHSIAHSIRSHHTH) the composition is skewed to basic residues.

It belongs to the DSH family. Expressed throughout the epidermis.

It localises to the cytoplasm. In terms of biological role, involved in the signal transduction pathway mediated by multiple Wnt genes. Required during ciliogenesis for the docking of basal bodies to the apical plasma membrane. In Xenopus laevis (African clawed frog), this protein is Segment polarity protein dishevelled homolog DVL-3.